Reading from the N-terminus, the 549-residue chain is Oxygen-dependent choline dehydrogenase (549 aa).

Residue 4 to 33 coordinates FAD; it reads DFVIIGSGSAGSAMAYRLSEDGRYSVIVIE. Histidine 465 serves as the catalytic Proton acceptor.

It belongs to the GMC oxidoreductase family. FAD is required as a cofactor.

It carries out the reaction choline + A = betaine aldehyde + AH2. The enzyme catalyses betaine aldehyde + NAD(+) + H2O = glycine betaine + NADH + 2 H(+). The protein operates within amine and polyamine biosynthesis; betaine biosynthesis via choline pathway; betaine aldehyde from choline (cytochrome c reductase route): step 1/1. Functionally, involved in the biosynthesis of the osmoprotectant glycine betaine. Catalyzes the oxidation of choline to betaine aldehyde and betaine aldehyde to glycine betaine at the same rate. This chain is Oxygen-dependent choline dehydrogenase, found in Brucella anthropi (strain ATCC 49188 / DSM 6882 / CCUG 24695 / JCM 21032 / LMG 3331 / NBRC 15819 / NCTC 12168 / Alc 37) (Ochrobactrum anthropi).